We begin with the raw amino-acid sequence, 624 residues long: Chaperone protein HtpG (624 aa).

Positions 1–336 (MKGQETRGFQ…SNDLPLNVSR (336 aa)) are a; substrate-binding. Residues 337 to 552 (EILQDSTVTR…ADEMSTQMAK (216 aa)) are b. Positions 553–624 (LFAAAGQSVP…IRRMNQLLVS (72 aa)) are c.

This sequence belongs to the heat shock protein 90 family. As to quaternary structure, homodimer.

The protein resides in the cytoplasm. In terms of biological role, molecular chaperone. Has ATPase activity. The chain is Chaperone protein HtpG from Salmonella choleraesuis (strain SC-B67).